We begin with the raw amino-acid sequence, 139 residues long: Arsenate reductase (139 aa).

Active-site nucleophile residues include Cys-10, Cys-82, and Cys-89. 2 disulfide bridges follow: Cys-10/Cys-82 and Cys-82/Cys-89.

This sequence belongs to the low molecular weight phosphotyrosine protein phosphatase family. Thioredoxin-coupled ArsC subfamily.

It localises to the cytoplasm. The enzyme catalyses arsenate + [thioredoxin]-dithiol + H(+) = arsenite + [thioredoxin]-disulfide + H2O. Functionally, catalyzes the reduction of arsenate [As(V)] to arsenite [As(III)]. The polypeptide is Arsenate reductase (Halalkalibacterium halodurans (strain ATCC BAA-125 / DSM 18197 / FERM 7344 / JCM 9153 / C-125) (Bacillus halodurans)).